The primary structure comprises 266 residues: Glucosamine-6-phosphate deaminase (266 aa).

Residue Asp72 is the Proton acceptor; for enolization step of the active site. The For ring-opening step role is filled by Asp141. Catalysis depends on His143, which acts as the Proton acceptor; for ring-opening step. Glu148 acts as the For ring-opening step in catalysis.

Belongs to the glucosamine/galactosamine-6-phosphate isomerase family. NagB subfamily. In terms of assembly, homohexamer.

The enzyme catalyses alpha-D-glucosamine 6-phosphate + H2O = beta-D-fructose 6-phosphate + NH4(+). Its pathway is amino-sugar metabolism; N-acetylneuraminate degradation; D-fructose 6-phosphate from N-acetylneuraminate: step 5/5. Allosterically activated by N-acetylglucosamine 6-phosphate (GlcNAc6P). Functionally, catalyzes the reversible isomerization-deamination of glucosamine 6-phosphate (GlcN6P) to form fructose 6-phosphate (Fru6P) and ammonium ion. This Vibrio vulnificus (strain CMCP6) protein is Glucosamine-6-phosphate deaminase.